The chain runs to 1503 residues: Translocase of chloroplast 159, chloroplastic (1503 aa).

Residues 1–24 show a composition bias toward polar residues; it reads MDSKSVTPEPTNPFYASSGQSGKT. Positions 1-210 are disordered; the sequence is MDSKSVTPEP…GGKVDVDDKS (210 aa). The helical transmembrane segment at 21 to 37 threads the bilayer; the sequence is SGKTYASVVAAAAAAAA. Ser71 is modified (phosphoserine). Composition is skewed to basic and acidic residues over residues 85 to 98 and 176 to 210; these read KVSD…KEDS and SESK…DDKS. Phosphoserine is present on residues Ser210, Ser281, and Ser288. Disordered regions lie at residues 298 to 338 and 429 to 464; these read KFTS…DVEK and VHNK…SEGD. The span at 447–456 shows a compositional bias: basic and acidic residues; sequence ESDKATEEGG. Residues Ser448, Ser461, Ser589, Ser609, Ser630, Ser632, and Ser665 each carry the phosphoserine modification. The disordered stretch occupies residues 610-633; that stretch reads FGGKEVDQEPSGEGVTRVDGSESE. Positions 781-804 form a coiled coil; the sequence is EEEKQKLEKLQSLRVKFLRLLQRL. Residues 853–1087 form the AIG1-type G domain; that stretch reads IFSLNILVLG…RPQEPLDHRK (235 aa). The G1 stretch occupies residues 862-869; the sequence is GKAGVGKS. GTP-binding positions include 865 to 870 and 884 to 889; these read GVGKSA and DAFGLS. Position 869 (Ser869) interacts with Mg(2+). Residues 884-887 form a homodimerization region; the sequence is DAFG. A G2 region spans residues 889–893; it reads STTSV. Positions 909 to 912 are G3; it reads DTPG. The interval 947-952 is homodimerization; the sequence is RLDTQT. Residues 981–984 are G4; sequence THAA. GTP contacts are provided by residues His982 and 1035-1036; that span reads EN. Residues 1035–1037 form a G5 region; it reads ENH. Positions 1175–1203 form a coiled coil; the sequence is DYRVKLLQKKQWREELKRMKEMKKNGKKL. Residues 1203-1222 are disordered; it reads LGESEFGYPGEEDDPENGAP.

It belongs to the TRAFAC class TrmE-Era-EngA-EngB-Septin-like GTPase superfamily. AIG1/Toc34/Toc159-like paraseptin GTPase family. TOC159 subfamily. In terms of assembly, homodimer and heterodimer with TOC33. Part of the TOC core complex that includes 1 protein for the specific recognition of transit peptides surrounded by a ring composed of four proteins forming translocation channels, and four to five GTP-binding proteins providing energy. This core complex can interact with components of the TIC complex to form a larger import complex. Chloroplastic protein precursor such as prSS (precursor of the RuBisCO small subunit) interacts with these complexes. The TOC complex contains a specific subset of polar lipids such as digalactosyldiacylglyceride (DGDG), phosphatidylcholine (PC) and phosphatidylglycerol (PG). Interacts with SP1. Requires Mg(2+) as cofactor. In terms of processing, phosphorylated by KOC1.

The protein resides in the plastid. It is found in the chloroplast outer membrane. The protein localises to the cytoplasm. In terms of biological role, GTPase involved in protein precursor import into chloroplasts. Seems to recognize chloroplast-destined precursor proteins and regulate their presentation to the translocation channel through GTP hydrolysis. Required for chloroplast biogenesis. Probably specialized in the import of nuclear encoded photosynthetic preproteins from the cytoplasm to the chloroplast. The chain is Translocase of chloroplast 159, chloroplastic from Arabidopsis thaliana (Mouse-ear cress).